The chain runs to 330 residues: DNA-directed RNA polymerase subunit alpha (330 aa).

Residues 1–237 (MYTEINEMLT…RQLHAFVDMK (237 aa)) are alpha N-terminal domain (alpha-NTD). The tract at residues 251-330 (FDPVLLRSVD…ENWPPASLGE (80 aa)) is alpha C-terminal domain (alpha-CTD).

This sequence belongs to the RNA polymerase alpha chain family. In terms of assembly, homodimer. The RNAP catalytic core consists of 2 alpha, 1 beta, 1 beta' and 1 omega subunit. When a sigma factor is associated with the core the holoenzyme is formed, which can initiate transcription.

The catalysed reaction is RNA(n) + a ribonucleoside 5'-triphosphate = RNA(n+1) + diphosphate. In terms of biological role, DNA-dependent RNA polymerase catalyzes the transcription of DNA into RNA using the four ribonucleoside triphosphates as substrates. The protein is DNA-directed RNA polymerase subunit alpha of Legionella pneumophila (strain Corby).